The chain runs to 485 residues: L-ornithine N(5)-oxygenase (485 aa).

FAD contacts are provided by residues 49–57 and glutamine 68; that span reads ERQQQFVWH. Lysine 73 contributes to the L-ornithine binding site. Position 134 (valine 134) interacts with FAD. Position 243 (arginine 243) interacts with NADP(+). L-ornithine contacts are provided by residues 257-260 and asparagine 287; that span reads NEIF. 287–289 is an NADP(+) binding site; sequence NYS. An FAD-binding site is contributed by 425–427; the sequence is TLL. L-ornithine is bound at residue serine 428.

It belongs to the lysine N(6)-hydroxylase/L-ornithine N(5)-oxygenase family. Homotetramer. FAD is required as a cofactor.

The catalysed reaction is L-ornithine + NADH + O2 = N(5)-hydroxy-L-ornithine + NAD(+) + H2O. It catalyses the reaction L-ornithine + NADPH + O2 = N(5)-hydroxy-L-ornithine + NADP(+) + H2O. Its pathway is siderophore biosynthesis. L-ornithine N(5)-oxygenase; part of the gene cluster that mediates the biosynthesis of desferriferrichrome that chelates Fe(3+) to form ferrichrome. Fe(3+) is a key factor for induction of trap formation and the fungus uses the iron chelating desferriferrichrome to sequester Fe(3+) to inhibit trap formation and increase nematicidal activity. The biosynthesis of desferriferrichrome requires the action of the L-ornithine N(5)-oxygenase (LOO) Ao414 that hydroxylates L-ornithine at N(5), resulting in the formation of N(5)-hydroxyl-L-ornithine, which is subsequently N-acetylated to yield N(5)-acetyl-N(5)-hydroxy-L-ornithine (L-AHO). L-AHO harbors one hydroxamate moiety, which is the key core responsible for chelating iron. Then, L-AHO is further condensated with glycines to form desferriferrichrome through the NRPS protein Ao415. This is L-ornithine N(5)-oxygenase from Arthrobotrys oligospora (strain ATCC 24927 / CBS 115.81 / DSM 1491) (Nematode-trapping fungus).